Consider the following 247-residue polypeptide: Large ribosomal subunit protein uL30z (247 aa).

It belongs to the universal ribosomal protein uL30 family.

This Arabidopsis thaliana (Mouse-ear cress) protein is Large ribosomal subunit protein uL30z (RPL7A).